Consider the following 253-residue polypeptide: uncharacterized protein (253 aa).

Positions 200–209 are enriched in basic and acidic residues; it reads TGREHAHKGP. Disordered stretches follow at residues 200 to 225 and 234 to 253; these read TGREHAHKGPELTTPDSGLPRPPNPA and QHSPPLGTSTPSAVLLSAAT.

In terms of tissue distribution, most abundantly expressed in gastrointestinal tissues. Expressed at lower levels in kidney and placenta. Expressed in fetal brain, liver, placenta, kidney and lung.

This is an uncharacterized protein from Homo sapiens (Human).